The primary structure comprises 1787 residues: Chitin synthase 5 (1787 aa).

Residues 1-26 (MASRRMSMYSVTSEGMGGPRGAGQQS) form a disordered region. The N-linked (GlcNAc...) asparagine glycan is linked to Asn164. The interval 345–367 (RIRDGDESSDGGRGARTPNSAED) is disordered. Residues Asn643, Asn657, Asn668, and Asn695 are each glycosylated (N-linked (GlcNAc...) asparagine). Transmembrane regions (helical) follow at residues 747 to 767 (MWVA…LRYV) and 783 to 803 (FVLC…IIFL). N-linked (GlcNAc...) asparagine glycans are attached at residues Asn894 and Asn1018. The chain crosses the membrane as a helical span at residues 1055 to 1075 (FLLAFAIIMCAVILLKFVSAL). Asn1420 carries N-linked (GlcNAc...) asparagine glycosylation. The next 3 helical transmembrane spans lie at 1445-1465 (FVVF…VYLG), 1478-1498 (FPLI…LIFI), and 1506-1526 (IGWM…LPIY). Residue Asn1533 is glycosylated (N-linked (GlcNAc...) asparagine). The disordered stretch occupies residues 1628–1657 (SPNSPAPYQHMSRSPTAYAGPTPYSDNPAA). A DEK-C domain is found at 1729–1785 (GPDDFQIVDAIRAVLMEVDLDTVTKKQVRALVEQRLQTELVGERRTFLDRQIDNELA).

The protein belongs to the chitin synthase family. Class V subfamily.

The protein resides in the cell membrane. It catalyses the reaction [(1-&gt;4)-N-acetyl-beta-D-glucosaminyl](n) + UDP-N-acetyl-alpha-D-glucosamine = [(1-&gt;4)-N-acetyl-beta-D-glucosaminyl](n+1) + UDP + H(+). In terms of biological role, polymerizes chitin, a structural polymer of the cell wall and septum, by transferring the sugar moiety of UDP-GlcNAc to the non-reducing end of the growing chitin polymer. May play a minor overlapping role with CHS6 in growth and differentiation. The chain is Chitin synthase 5 from Pyricularia oryzae (strain 70-15 / ATCC MYA-4617 / FGSC 8958) (Rice blast fungus).